We begin with the raw amino-acid sequence, 618 residues long: Arginine--tRNA ligase (618 aa).

A 'HIGH' region motif is present at residues 113–123 (ANPIHPLHIGH).

The protein belongs to the class-I aminoacyl-tRNA synthetase family.

It is found in the cytoplasm. It catalyses the reaction tRNA(Arg) + L-arginine + ATP = L-arginyl-tRNA(Arg) + AMP + diphosphate. The protein is Arginine--tRNA ligase of Sulfolobus acidocaldarius (strain ATCC 33909 / DSM 639 / JCM 8929 / NBRC 15157 / NCIMB 11770).